The primary structure comprises 569 residues: Aspartic proteinase 3 (569 aa).

The first 21 residues, 1–21 (MKLKTVRSAVLSSLFASQVLG), serve as a signal peptide directing secretion. Residues 22 to 67 (KIIPAANKRDDDSNSKFVKLPFHKLYGDSLENVGSDKKPEVRLLKR) constitute a propeptide that is removed on maturation. The Peptidase A1 domain occupies 83–475 (YSVDLEVGTP…DLENLEISMA (393 aa)). An N-linked (GlcNAc...) asparagine glycan is attached at Asn95. Asp101 is an active-site residue. Asn203, Asn232, Asn242, Asn245, Asn299, and Asn358 each carry an N-linked (GlcNAc...) asparagine glycan. The active site involves Asp371. 3 N-linked (GlcNAc...) asparagine glycosylation sites follow: Asn480, Asn522, and Asn532. Residue Asn548 is the site of GPI-anchor amidated asparagine attachment. Positions 549–569 (VGDHIVPSLPLTLISLLFAFI) are cleaved as a propeptide — removed in mature form.

The protein belongs to the peptidase A1 family. In terms of assembly, consists of an alpha and a beta subunit, which are maintained together by a disulfide bond. The zymogen is transported to the periplasm, where the propeptide is removed and the enzyme is further subjected to an internal, autocatalytic cleavage to generate an alpha/beta two-subunit endopeptidase. The proteolytic processing at the cell surface is regulated by the environmental pH. In terms of processing, extensively N-glycosylated.

The protein resides in the cell membrane. The enzyme catalyses Hydrolyzes various precursor proteins with Arg or Lys in P1, and commonly Arg or Lys also in P2. The P3 amino acid is usually non-polar, but otherwise additional basic amino acids are favorable in both non-prime and prime positions.. Cleaves proteins C-terminally to mono- and paired-basic residues. Involved in the shedding of a subset of GPI-anchored plasma membrane proteins from the cell surface, including itself, GAS1 and MSB2. May also play a role in the maturation of GPI-mannoproteins associated with the cell wall. Can process the alpha-mating factor precursor. Required for cell wall integrity. The sequence is that of Aspartic proteinase 3 (YPS1) from Saccharomyces cerevisiae (strain ATCC 204508 / S288c) (Baker's yeast).